We begin with the raw amino-acid sequence, 570 residues long: MHKKDIIRLLETIAVYMELKGDNPFKVSAFRKAAAALEQDDRSLSEMDDMMSLSGIGKGTYSVIKEYIDEGKSSTLESLQKEVPEGLVPLLKLPGLGGKKIAKLYKELGVHDAESLKEACEQQKVQGLAGFGKKSEEKILQALGEAGKQPERFPIGYALRIAREIEEHLSQFTHIIKFSRAGSLRRARETVKDLDYIIATDHPAEVREQLLELPNIKSVIASGDTKVSVILSFEYETSVDFRLVTEEQFPTTLHHFTGSKDHNIKMRQIAKERGERISEYGVETVETGEIKTFPSEREFYAHFGLPLIPPEIRESGQEVETYSDSIELIELGQIKGDLHMHSTWSDGAFSIREMAEACIKKGYQYMAITDHSQYLKVANGLTAERLKQQAKEIDALNAEFENFRILKGVEMDILPDGTLDYDDDVLAEMDIVIASIHSSFNQPEHVIMKRLETALTNKHVDIIAHPTGRLIGRRAGYEIDIDQLIELARKTNTALELNANPARLDLRTEHLMKANEQGVTLVINTDAHNIEMLDDMKTGVTAARKGWTETKNVLNARSLKDVEAFLKRND.

The segment at 1–315 (MHKKDIIRLL…PLIPPEIRES (315 aa)) is DNA polymerase type-X. The a divalent metal cation site is built by Asp193, Asp195, and Asp240. The segment at 333–570 (QIKGDLHMHS…DVEAFLKRND (238 aa)) is 3'-5' exonuclease. Mn(2+) contacts are provided by His339, His341, His371, Glu410, His437, His465, Asp526, and His528.

This sequence in the N-terminal section; belongs to the DNA polymerase type-X family. It in the C-terminal section; belongs to the PHP family. Monomer. Mn(2+) is required as a cofactor. Mg(2+) serves as cofactor.

The enzyme catalyses DNA(n) + a 2'-deoxyribonucleoside 5'-triphosphate = DNA(n+1) + diphosphate. The catalysed reaction is Exonucleolytic cleavage in the 3'- to 5'-direction to yield nucleoside 5'-phosphates.. Its activity is regulated as follows. The polymerization activity is inhibited in the presence of 2'-3'-dideoxynucleoside 5'-triphosphate (ddNTP). In terms of biological role, strictly DNA-template-directed DNA polymerase, preferentially acting on DNA structures containing gaps from one to a few nucleotides and bearing a phosphate group at the 5' end of the downstream DNA. The fact that PolX is able to conduct filling of a single-nucleotide gap, allowing further sealing of the resulting nick by a DNA ligase, points to a putative role in base excision repair (BER) during the B.subtilis life cycle. Moreover, also possesses a 3'-5' exonuclease activity able to edit unpaired 3'-termini in a gapped DNA substrate and likely involved in resecting unannealed 3'-termini during DNA repair. The same PolX molecule could perform the subsequent gap-filling step. Does not display 5'-deoxyribose 5'-phosphate (dRP) lyase activity, as predicted by the lack of the lysine and tyrosine residues responsible for the dRP lyase activity in some other PolX members. This chain is DNA polymerase/3'-5' exonuclease PolX (polX), found in Bacillus subtilis (strain 168).